Consider the following 428-residue polypeptide: Spermidine/putrescine import ATP-binding protein PotA (428 aa).

The ABC transporter domain maps to I6–I238. Residue G40–S47 coordinates ATP.

This sequence belongs to the ABC transporter superfamily. Spermidine/putrescine importer (TC 3.A.1.11.1) family. In terms of assembly, the complex is composed of two ATP-binding proteins (PotA), two transmembrane proteins (PotB and PotC) and a solute-binding protein (PotD).

The protein resides in the cell membrane. It carries out the reaction ATP + H2O + polyamine-[polyamine-binding protein]Side 1 = ADP + phosphate + polyamineSide 2 + [polyamine-binding protein]Side 1.. In terms of biological role, part of the ABC transporter complex PotABCD involved in spermidine/putrescine import. Responsible for energy coupling to the transport system. This chain is Spermidine/putrescine import ATP-binding protein PotA, found in Lactococcus lactis subsp. lactis (strain IL1403) (Streptococcus lactis).